Reading from the N-terminus, the 244-residue chain is Ubiquinone/menaquinone biosynthesis C-methyltransferase UbiE (244 aa).

S-adenosyl-L-methionine is bound by residues Thr70, Asp91, and 117–118 (DA).

It belongs to the class I-like SAM-binding methyltransferase superfamily. MenG/UbiE family.

It catalyses the reaction a 2-demethylmenaquinol + S-adenosyl-L-methionine = a menaquinol + S-adenosyl-L-homocysteine + H(+). The catalysed reaction is a 2-methoxy-6-(all-trans-polyprenyl)benzene-1,4-diol + S-adenosyl-L-methionine = a 5-methoxy-2-methyl-3-(all-trans-polyprenyl)benzene-1,4-diol + S-adenosyl-L-homocysteine + H(+). The protein operates within quinol/quinone metabolism; menaquinone biosynthesis; menaquinol from 1,4-dihydroxy-2-naphthoate: step 2/2. It participates in cofactor biosynthesis; ubiquinone biosynthesis. Functionally, methyltransferase required for the conversion of demethylmenaquinol (DMKH2) to menaquinol (MKH2) and the conversion of 2-polyprenyl-6-methoxy-1,4-benzoquinol (DDMQH2) to 2-polyprenyl-3-methyl-6-methoxy-1,4-benzoquinol (DMQH2). This is Ubiquinone/menaquinone biosynthesis C-methyltransferase UbiE from Chromobacterium violaceum (strain ATCC 12472 / DSM 30191 / JCM 1249 / CCUG 213 / NBRC 12614 / NCIMB 9131 / NCTC 9757 / MK).